The following is a 196-amino-acid chain: ATP-dependent Clp protease proteolytic subunit (196 aa).

Ser101 functions as the Nucleophile in the catalytic mechanism. His126 is a catalytic residue.

Belongs to the peptidase S14 family. As to quaternary structure, component of the chloroplastic Clp protease core complex.

It localises to the plastid. It is found in the chloroplast stroma. The catalysed reaction is Hydrolysis of proteins to small peptides in the presence of ATP and magnesium. alpha-casein is the usual test substrate. In the absence of ATP, only oligopeptides shorter than five residues are hydrolyzed (such as succinyl-Leu-Tyr-|-NHMec, and Leu-Tyr-Leu-|-Tyr-Trp, in which cleavage of the -Tyr-|-Leu- and -Tyr-|-Trp bonds also occurs).. Cleaves peptides in various proteins in a process that requires ATP hydrolysis. Has a chymotrypsin-like activity. Plays a major role in the degradation of misfolded proteins. The protein is ATP-dependent Clp protease proteolytic subunit of Morus indica (Mulberry).